We begin with the raw amino-acid sequence, 227 residues long: 7-cyano-7-deazaguanine synthase (227 aa).

8 to 18 (VSGGADSATVL) is an ATP binding site. Residues Cys-192, Cys-202, Cys-205, and Cys-208 each contribute to the Zn(2+) site.

The protein belongs to the QueC family. Zn(2+) is required as a cofactor.

It carries out the reaction 7-carboxy-7-deazaguanine + NH4(+) + ATP = 7-cyano-7-deazaguanine + ADP + phosphate + H2O + H(+). It functions in the pathway purine metabolism; 7-cyano-7-deazaguanine biosynthesis. In terms of biological role, catalyzes the ATP-dependent conversion of 7-carboxy-7-deazaguanine (CDG) to 7-cyano-7-deazaguanine (preQ(0)). This Rickettsia akari (strain Hartford) protein is 7-cyano-7-deazaguanine synthase.